The following is a 35-amino-acid chain: 3-hydroxyisobutyrate dehydrogenase (35 aa).

Residue 4–33 coordinates NAD(+); it reads TPVGFIGLGNMGNPMAKNLMKHGYPLIIYD. Residue lysine 24 is modified to N6-acetyllysine; alternate. Lysine 24 bears the N6-succinyllysine; alternate mark.

It belongs to the HIBADH-related family. 3-hydroxyisobutyrate dehydrogenase subfamily. Homodimer.

Its subcellular location is the mitochondrion. It carries out the reaction 3-hydroxy-2-methylpropanoate + NAD(+) = 2-methyl-3-oxopropanoate + NADH + H(+). Its pathway is amino-acid degradation; L-valine degradation. This is 3-hydroxyisobutyrate dehydrogenase (HIBADH) from Oryctolagus cuniculus (Rabbit).